The following is a 358-amino-acid chain: Isopentenyl-diphosphate delta-isomerase (358 aa).

Residue 12-13 coordinates substrate; that stretch reads RK. FMN contacts are provided by residues 69-71, serine 99, and asparagine 128; that span reads AMT. Substrate is bound at residue glutamine 158. Residue glutamate 159 coordinates Mg(2+). Residues lysine 190, threonine 220, 267-269, and 288-289 contribute to the FMN site; these read GIR and AG.

Belongs to the IPP isomerase type 2 family. Homooctamer. Dimer of tetramers. The cofactor is FMN. It depends on NADPH as a cofactor. Requires Mg(2+) as cofactor.

It localises to the cytoplasm. The enzyme catalyses isopentenyl diphosphate = dimethylallyl diphosphate. Its function is as follows. Involved in the biosynthesis of isoprenoids. Catalyzes the 1,3-allylic rearrangement of the homoallylic substrate isopentenyl (IPP) to its allylic isomer, dimethylallyl diphosphate (DMAPP). The sequence is that of Isopentenyl-diphosphate delta-isomerase from Listeria monocytogenes serotype 4b (strain CLIP80459).